Consider the following 113-residue polypeptide: Sperm-associated antigen 11B (113 aa).

The N-terminal stretch at 1–26 (MIPRLLPFFASLLFAALLFPGLSNAS) is a signal peptide. Disulfide bonds link Cys80–Cys108, Cys87–Cys101, and Cys91–Cys109.

It belongs to the beta-defensin family.

It is found in the secreted. Functionally, has antimicrobial activity against E.coli. Plays a role in the defense response in the male reproductive tract, contributing to sperm maturation, storage and protection. In Mus musculus (Mouse), this protein is Sperm-associated antigen 11B.